The following is a 235-amino-acid chain: Small ribosomal subunit protein eS6 (235 aa).

The tract at residues Gly190–Pro212 is disordered.

The protein belongs to the eukaryotic ribosomal protein eS6 family.

This is Small ribosomal subunit protein eS6 from Aeropyrum pernix (strain ATCC 700893 / DSM 11879 / JCM 9820 / NBRC 100138 / K1).